The following is a 338-amino-acid chain: DNA-directed RNA polymerase subunit alpha (338 aa).

The tract at residues 1–225 (MLISQRPTIT…ELFGLARELN (225 aa)) is alpha N-terminal domain (alpha-NTD). The tract at residues 240 to 338 (TEYIAAYSMP…YIDVEAEDSE (99 aa)) is alpha C-terminal domain (alpha-CTD). Residues 319 to 338 (LEGYDAETGGYIDVEAEDSE) are disordered.

Belongs to the RNA polymerase alpha chain family. As to quaternary structure, homodimer. The RNAP catalytic core consists of 2 alpha, 1 beta, 1 beta' and 1 omega subunit. When a sigma factor is associated with the core the holoenzyme is formed, which can initiate transcription.

It catalyses the reaction RNA(n) + a ribonucleoside 5'-triphosphate = RNA(n+1) + diphosphate. In terms of biological role, DNA-dependent RNA polymerase catalyzes the transcription of DNA into RNA using the four ribonucleoside triphosphates as substrates. In Corynebacterium glutamicum (strain R), this protein is DNA-directed RNA polymerase subunit alpha.